The sequence spans 480 residues: Aspartyl/glutamyl-tRNA(Asn/Gln) amidotransferase subunit B (480 aa).

It belongs to the GatB/GatE family. GatB subfamily. In terms of assembly, heterotrimer of A, B and C subunits.

The enzyme catalyses L-glutamyl-tRNA(Gln) + L-glutamine + ATP + H2O = L-glutaminyl-tRNA(Gln) + L-glutamate + ADP + phosphate + H(+). It catalyses the reaction L-aspartyl-tRNA(Asn) + L-glutamine + ATP + H2O = L-asparaginyl-tRNA(Asn) + L-glutamate + ADP + phosphate + 2 H(+). Allows the formation of correctly charged Asn-tRNA(Asn) or Gln-tRNA(Gln) through the transamidation of misacylated Asp-tRNA(Asn) or Glu-tRNA(Gln) in organisms which lack either or both of asparaginyl-tRNA or glutaminyl-tRNA synthetases. The reaction takes place in the presence of glutamine and ATP through an activated phospho-Asp-tRNA(Asn) or phospho-Glu-tRNA(Gln). The sequence is that of Aspartyl/glutamyl-tRNA(Asn/Gln) amidotransferase subunit B from Streptococcus pneumoniae serotype 4 (strain ATCC BAA-334 / TIGR4).